A 147-amino-acid chain; its full sequence is MSMSTSTEIIAHHWAFAIFLIIAIGLCCLMLVGGWFLGGRARARSKNTPFESGIDSVGSARLRLSAKFYLVAMFFVIFDVEALYLFAWSTSIRESGWVGFVEAAIFIFVLLAGLVYLVRIGALDWTPARSRRERMNPETNSIANRQR.

A run of 3 helical transmembrane segments spans residues 16–36 (FAIF…GGWF), 68–88 (FYLV…LFAW), and 98–118 (VGFV…VYLV).

The protein belongs to the complex I subunit 3 family. NDH-1 is composed of 13 different subunits. Subunits NuoA, H, J, K, L, M, N constitute the membrane sector of the complex.

Its subcellular location is the cell inner membrane. It catalyses the reaction a quinone + NADH + 5 H(+)(in) = a quinol + NAD(+) + 4 H(+)(out). In terms of biological role, NDH-1 shuttles electrons from NADH, via FMN and iron-sulfur (Fe-S) centers, to quinones in the respiratory chain. The immediate electron acceptor for the enzyme in this species is believed to be ubiquinone. Couples the redox reaction to proton translocation (for every two electrons transferred, four hydrogen ions are translocated across the cytoplasmic membrane), and thus conserves the redox energy in a proton gradient. The sequence is that of NADH-quinone oxidoreductase subunit A from Citrobacter koseri (strain ATCC BAA-895 / CDC 4225-83 / SGSC4696).